The chain runs to 123 residues: PTS-dependent dihydroxyacetone kinase, phosphotransferase subunit DhaM (123 aa).

A PTS EIIA type-4 domain is found at 2–123 (TYGIVIVSHS…EQLEKMLIEK (122 aa)). Residue histidine 10 is the Tele-phosphohistidine intermediate; for EIIA activity of the active site.

Homodimer. The dihydroxyacetone kinase complex is composed of a homodimer of DhaM, a homodimer of DhaK and the subunit DhaL.

The enzyme catalyses dihydroxyacetone + phosphoenolpyruvate = dihydroxyacetone phosphate + pyruvate. Its pathway is polyol metabolism; glycerol degradation. Its function is as follows. Component of the dihydroxyacetone kinase complex, which is responsible for the phosphoenolpyruvate (PEP)-dependent phosphorylation of dihydroxyacetone. DhaM serves as the phosphoryl donor. Is phosphorylated by phosphoenolpyruvate in an EI- and HPr-dependent reaction, and a phosphorelay system on histidine residues finally leads to phosphoryl transfer to DhaL and dihydroxyacetone. This chain is PTS-dependent dihydroxyacetone kinase, phosphotransferase subunit DhaM, found in Lactococcus lactis subsp. lactis (strain IL1403) (Streptococcus lactis).